A 467-amino-acid chain; its full sequence is Mitochondrial distribution and morphology protein 10 (467 aa).

The segment at 361–393 (GLPDTAPSRNRECDDLPPPRRDNYHHQRSPHAS) is disordered. The span at 369–385 (RNRECDDLPPPRRDNYH) shows a compositional bias: basic and acidic residues.

It belongs to the MDM10 family. As to quaternary structure, component of the ER-mitochondria encounter structure (ERMES) or MDM complex, composed of MMM1, MDM10, MDM12 and MDM34. Associates with the mitochondrial outer membrane sorting assembly machinery SAM(core) complex.

It localises to the mitochondrion outer membrane. In terms of biological role, component of the ERMES/MDM complex, which serves as a molecular tether to connect the endoplasmic reticulum and mitochondria. Components of this complex are involved in the control of mitochondrial shape and protein biogenesis and may function in phospholipid exchange. MDM10 is involved in the late assembly steps of the general translocase of the mitochondrial outer membrane (TOM complex). Functions in the TOM40-specific route of the assembly of outer membrane beta-barrel proteins, including the association of TOM40 with the receptor TOM22 and small TOM proteins. Can associate with the SAM(core) complex as well as the MDM12-MMM1 complex, both involved in late steps of the major beta-barrel assembly pathway, that is responsible for biogenesis of all outer membrane beta-barrel proteins. May act as a switch that shuttles between both complexes and channels precursor proteins into the TOM40-specific pathway. Plays a role in mitochondrial morphology and in the inheritance of mitochondria. The sequence is that of Mitochondrial distribution and morphology protein 10 from Ajellomyces capsulatus (strain NAm1 / WU24) (Darling's disease fungus).